The chain runs to 195 residues: Peptidyl-tRNA hydrolase (195 aa).

Tyr17 provides a ligand contact to tRNA. The active-site Proton acceptor is His22. The tRNA site is built by Tyr68, Asn70, and Asn116.

It belongs to the PTH family. As to quaternary structure, monomer.

Its subcellular location is the cytoplasm. The catalysed reaction is an N-acyl-L-alpha-aminoacyl-tRNA + H2O = an N-acyl-L-amino acid + a tRNA + H(+). In terms of biological role, hydrolyzes ribosome-free peptidyl-tRNAs (with 1 or more amino acids incorporated), which drop off the ribosome during protein synthesis, or as a result of ribosome stalling. Functionally, catalyzes the release of premature peptidyl moieties from peptidyl-tRNA molecules trapped in stalled 50S ribosomal subunits, and thus maintains levels of free tRNAs and 50S ribosomes. The polypeptide is Peptidyl-tRNA hydrolase (Shewanella frigidimarina (strain NCIMB 400)).